A 235-amino-acid polypeptide reads, in one-letter code: Peroxisomal membrane protein 11C (235 aa).

Residues 1–91 (MSTLETTRAE…LPLVLLGKSK (91 aa)) lie on the Cytoplasmic side of the membrane. Residues 92-108 (NALLSTFLFLDQIVWLG) form a helical membrane-spanning segment. The Lumenal portion of the chain corresponds to 109-206 (RTGIYKDKER…LLQLAPKKVT (98 aa)). A helical transmembrane segment spans residues 207–226 (PRVTGAFGFASSLISCYQLL). The Cytoplasmic segment spans residues 227–235 (PSHPKSKMV).

Belongs to the peroxin-11 family. In terms of assembly, homooligomer. Interacts with ARC5 and FIS1B on peroxisomes. Expressed in roots and developing siliques.

It localises to the peroxisome membrane. In terms of biological role, involved in peroxisomal proliferation. Promotes peroxisomal duplication, aggregation or elongation without fission. The protein is Peroxisomal membrane protein 11C (PEX11C) of Arabidopsis thaliana (Mouse-ear cress).